Here is a 126-residue protein sequence, read N- to C-terminus: RutC family protein SSO3206 (126 aa).

It belongs to the RutC family.

The polypeptide is RutC family protein SSO3206 (Saccharolobus solfataricus (strain ATCC 35092 / DSM 1617 / JCM 11322 / P2) (Sulfolobus solfataricus)).